Here is a 310-residue protein sequence, read N- to C-terminus: HPr kinase/phosphorylase (310 aa).

Active-site residues include histidine 138 and lysine 159. 153–160 (GASGIGKS) contacts ATP. Serine 160 lines the Mg(2+) pocket. Aspartate 177 (proton acceptor; for phosphorylation activity. Proton donor; for dephosphorylation activity) is an active-site residue. The tract at residues 201 to 210 (IEIRGVGIID) is important for the catalytic mechanism of both phosphorylation and dephosphorylation. Glutamate 202 lines the Mg(2+) pocket. Residue arginine 243 is part of the active site. The interval 264–269 (PVKTGR) is important for the catalytic mechanism of dephosphorylation.

It belongs to the HPrK/P family. As to quaternary structure, homohexamer. It depends on Mg(2+) as a cofactor.

The enzyme catalyses [HPr protein]-L-serine + ATP = [HPr protein]-O-phospho-L-serine + ADP + H(+). It carries out the reaction [HPr protein]-O-phospho-L-serine + phosphate + H(+) = [HPr protein]-L-serine + diphosphate. In terms of biological role, catalyzes the ATP- as well as the pyrophosphate-dependent phosphorylation of a specific serine residue in HPr, a phosphocarrier protein of the phosphoenolpyruvate-dependent sugar phosphotransferase system (PTS). HprK/P also catalyzes the pyrophosphate-producing, inorganic phosphate-dependent dephosphorylation (phosphorolysis) of seryl-phosphorylated HPr (P-Ser-HPr). The two antagonistic activities of HprK/P are regulated by several intracellular metabolites, which change their concentration in response to the absence or presence of rapidly metabolisable carbon sources (glucose, fructose, etc.) in the growth medium. Therefore, by controlling the phosphorylation state of HPr, HPrK/P is a sensor enzyme that plays a major role in the regulation of carbon metabolism and sugar transport: it mediates carbon catabolite repression (CCR), and regulates PTS-catalyzed carbohydrate uptake and inducer exclusion. In Lactococcus lactis subsp. cremoris (strain SK11), this protein is HPr kinase/phosphorylase.